A 548-amino-acid chain; its full sequence is Chaperonin GroEL (548 aa).

ATP-binding positions include 29–32, Lys-50, 86–90, Gly-414, 478–480, and Asp-494; these read TMGP, DGTTT, and NAA.

The protein belongs to the chaperonin (HSP60) family. In terms of assembly, forms a cylinder of 14 subunits composed of two heptameric rings stacked back-to-back. Interacts with the co-chaperonin GroES.

The protein localises to the cytoplasm. It carries out the reaction ATP + H2O + a folded polypeptide = ADP + phosphate + an unfolded polypeptide.. Together with its co-chaperonin GroES, plays an essential role in assisting protein folding. The GroEL-GroES system forms a nano-cage that allows encapsulation of the non-native substrate proteins and provides a physical environment optimized to promote and accelerate protein folding. The protein is Chaperonin GroEL of Legionella pneumophila (strain Paris).